Consider the following 1316-residue polypeptide: DNA-directed RNA polymerase subunit beta' (1316 aa).

4 residues coordinate Zn(2+): Cys60, Cys62, Cys75, and Cys78. The Mg(2+) site is built by Asp535, Asp537, and Asp539. Zn(2+)-binding residues include Cys891, Cys968, Cys975, and Cys978.

It belongs to the RNA polymerase beta' chain family. In terms of assembly, the RNAP catalytic core consists of 2 alpha, 1 beta, 1 beta' and 1 omega subunit. When a sigma factor is associated with the core the holoenzyme is formed, which can initiate transcription. Requires Mg(2+) as cofactor. Zn(2+) serves as cofactor.

It catalyses the reaction RNA(n) + a ribonucleoside 5'-triphosphate = RNA(n+1) + diphosphate. DNA-dependent RNA polymerase catalyzes the transcription of DNA into RNA using the four ribonucleoside triphosphates as substrates. The protein is DNA-directed RNA polymerase subunit beta' of Mycobacterium ulcerans (strain Agy99).